The following is a 261-amino-acid chain: Small ribosomal subunit protein mS23 (261 aa).

The disordered stretch occupies residues 233–261 (RASSPSASWTNETEEEQKPIDQDVEEIQL).

Belongs to the mitochondrion-specific ribosomal protein mS23 family. As to quaternary structure, component of the mitochondrial small ribosomal subunit.

The protein localises to the mitochondrion. The protein is Small ribosomal subunit protein mS23 (RSM25) of Kluyveromyces lactis (strain ATCC 8585 / CBS 2359 / DSM 70799 / NBRC 1267 / NRRL Y-1140 / WM37) (Yeast).